Here is a 313-residue protein sequence, read N- to C-terminus: Arabinooligosaccharides transport system permease protein AraP (313 aa).

The next 6 helical transmembrane spans lie at 39–59, 91–111, 126–146, 176–196, 224–244, and 281–301; these read FVLS…IMSF, LEYT…LAIF, ALFI…RLIF, MFLM…LYFL, ITLP…IIGG, and MGYG…VSLI. The region spanning 87–302 is the ABC transmembrane type-1 domain; it reads LWNTLEYTFW…IVILVVSLIS (216 aa).

Belongs to the binding-protein-dependent transport system permease family. MalFG subfamily. In terms of assembly, the complex is composed of two ATP-binding proteins (MsmX), two transmembrane proteins (AraP and AraQ) and a solute-binding protein (AraN).

The protein resides in the cell membrane. In terms of biological role, part of the ABC transporter complex AraNPQ involved in the uptake of arabinooligosaccharides. Transports alpha-1,5-arabinooligosaccharides, at least up to four L-arabinosyl units. Responsible for the translocation of the substrate across the membrane. The polypeptide is Arabinooligosaccharides transport system permease protein AraP (Bacillus subtilis (strain 168)).